The following is a 327-amino-acid chain: Undecaprenyl-phosphate 4-deoxy-4-formamido-L-arabinose transferase (327 aa).

2 helical membrane passes run 235 to 255 and 270 to 290; these read LLSL…VLLV and VFTL…GMGL.

This sequence belongs to the glycosyltransferase 2 family.

Its subcellular location is the cell inner membrane. The enzyme catalyses UDP-4-deoxy-4-formamido-beta-L-arabinose + di-trans,octa-cis-undecaprenyl phosphate = 4-deoxy-4-formamido-alpha-L-arabinopyranosyl di-trans,octa-cis-undecaprenyl phosphate + UDP. The protein operates within glycolipid biosynthesis; 4-amino-4-deoxy-alpha-L-arabinose undecaprenyl phosphate biosynthesis; 4-amino-4-deoxy-alpha-L-arabinose undecaprenyl phosphate from UDP-4-deoxy-4-formamido-beta-L-arabinose and undecaprenyl phosphate: step 1/2. Its pathway is bacterial outer membrane biogenesis; lipopolysaccharide biosynthesis. Its function is as follows. Catalyzes the transfer of 4-deoxy-4-formamido-L-arabinose from UDP to undecaprenyl phosphate. The modified arabinose is attached to lipid A and is required for resistance to polymyxin and cationic antimicrobial peptides. This is Undecaprenyl-phosphate 4-deoxy-4-formamido-L-arabinose transferase from Yersinia pestis bv. Antiqua (strain Antiqua).